The primary structure comprises 146 residues: Ribonuclease H (146 aa).

An RNase H type-1 domain is found at 1 to 143 (MQKKITIYTD…CDELARQAIQ (143 aa)). The Mg(2+) site is built by aspartate 10, glutamate 48, aspartate 70, and aspartate 135.

The protein belongs to the RNase H family. Monomer. Mg(2+) is required as a cofactor.

It is found in the cytoplasm. The enzyme catalyses Endonucleolytic cleavage to 5'-phosphomonoester.. Endonuclease that specifically degrades the RNA of RNA-DNA hybrids. The polypeptide is Ribonuclease H (Chlorobium luteolum (strain DSM 273 / BCRC 81028 / 2530) (Pelodictyon luteolum)).